The sequence spans 481 residues: Solute carrier family 46 member 2 (481 aa).

At 1–37 (MGPEAAGPGRGAAPRLQVRTWIEPVVAATQVASSLYE) the chain is on the cytoplasmic side. The chain crosses the membrane as a helical span at residues 38–58 (AGLLLVVKASFGAGAGAGAGA). At 59–83 (ASNHSAGPPRGAPEDQQQRAISNFY) the chain is on the extracellular side. N-linked (GlcNAc...) asparagine glycosylation occurs at N61. A helical membrane pass occupies residues 84–104 (IVYNLVVGLTPLLSAYALGWL). The Cytoplasmic portion of the chain corresponds to 105 to 113 (SDRRHRKVA). A helical membrane pass occupies residues 114–134 (ICVALLGFLLSRVGLLLKVLL). The Extracellular portion of the chain corresponds to 135-143 (DWPVEVLYG). A helical transmembrane segment spans residues 144 to 164 (AAALNGLCGGFSAFWAGVMAL). The Cytoplasmic portion of the chain corresponds to 165-179 (GSLGSSEGRRSVRLV). Residues 180 to 200 (LIDLILGLAGFCGSMASGHLF) traverse the membrane as a helical segment. Residues 201 to 210 (KQVAGHSGQG) lie on the Extracellular side of the membrane. Residues 211 to 231 (LVLTACSVSCATFALLYSLLV) traverse the membrane as a helical segment. Over 232–286 (LKVPEAAAGSGQALSAGDSVAGTVGTYRTLDPDHSDKQSVQGLHPPSPGKAKPRR) the chain is Cytoplasmic. The interval 263-282 (PDHSDKQSVQGLHPPSPGKA) is disordered. Residues 287–307 (TIIALLFLGAIVYDLAVVGTV) form a helical membrane-spanning segment. The Extracellular segment spans residues 308–326 (DVMPLFVLREPLSWNQVQV). The helical transmembrane segment at 327–347 (GYGMAAGYTIFITSFLGVLVF) threads the bilayer. The Cytoplasmic segment spans residues 348–353 (SRCFQD). The chain crosses the membrane as a helical span at residues 354–374 (TTMIMIGMVSFGSGALLLAFV). At 375–376 (KE) the chain is on the extracellular side. A helical membrane pass occupies residues 377-397 (TYMFYIARAVMLFALIPITTI). Residues 398–412 (RSAMSKLIKGSSYGK) are Cytoplasmic-facing. A helical transmembrane segment spans residues 413–433 (VFVILQLSLTLTGVVTSTVYN). Residues 434–446 (KIYQVTMEKFIGT) lie on the Extracellular side of the membrane. Residues 447-467 (CFALSSFLSFLAIIPIGIVAY) traverse the membrane as a helical segment. At 468-481 (KQASWLQYGDVRET) the chain is on the cytoplasmic side.

It belongs to the major facilitator superfamily. SLC46A family. Post-translationally, glycosylated. As to expression, highly expressed by the epididymal duct epithelium.

The protein resides in the endosome membrane. It localises to the cell membrane. It carries out the reaction N-acetyl-beta-D-glucosaminyl-(1-&gt;4)-1,6-anhydro-N-acetyl-beta-D-muramoyl-L-alanyl-gamma-D-glutamyl-meso-2,6-diaminopimeloyl-D-alanine(out) + n H(+)(out) = N-acetyl-beta-D-glucosaminyl-(1-&gt;4)-1,6-anhydro-N-acetyl-beta-D-muramoyl-L-alanyl-gamma-D-glutamyl-meso-2,6-diaminopimeloyl-D-alanine(in) + n H(+)(in). The enzyme catalyses L-alanyl-gamma-D-glutamyl-meso-2,6-diaminopimelate(out) + n H(+)(out) = L-alanyl-gamma-D-glutamyl-meso-2,6-diaminopimelate(in) + n H(+)(in). The catalysed reaction is N-acetyl-D-muramoyl-L-alanyl-D-isoglutamine(out) + n H(+)(out) = N-acetyl-D-muramoyl-L-alanyl-D-isoglutamine(in) + n H(+)(in). It catalyses the reaction 2',3'-cGAMP(out) + n H(+)(out) = 2',3'-cGAMP(in) + n H(+)(in). It carries out the reaction 3',3'-cGAMP(out) + n H(+)(out) = 3',3'-cGAMP(in) + n H(+)(in). Proton-coupled transporter that delivers pathogen-associated or danger-associated molecular patterns to cytosolic pattern recognition receptors as part of the innate immune response to microbes or tissue injury. Has selectivity toward muropeptides that contain the amino acid diaminopimelic acid (DAP-type peptidoglycan muropeptides) including Tri-DAP and tracheal toxin (TCT), common in Gram-negative bacteria and Gram-positive bacilli. In the context of immune recognition of skin microbiota, shuttles bacterial muropeptides across the endolysosomal membranes into the cytosol for recognition by NOD1, triggering MYD88-dependent secretion of IL1A and neutrophil recruitment in a pyroptosis-type inflammatory process. To a lesser extent and redundantly, transports muramyl dipeptides derived from most bacterial proteoglycans, eliciting NOD2 receptor activation and downstream inflammatory responses. Postulated to function as an importer of cyclic GMP-AMP dinucleotides (cGAMPs) in monocyte and macrophage cell lineages. Selectively imports cGAMPs derived from pathogenic bacteria such as 3'3'-cGAMP thus providing for differential immune recognition of pathogenic versus commensal bacteria. During tumorigenesis may transport extracellular tumor-derived 2'3'-cGAMP across the plasma membrane of M1-polarized macrophages to activate the anti-tumoral stimulator of interferon genes (STING) pathway. The transport mechanism, its electrogenicity and stoichiometry remain to be elucidated. In Canis lupus familiaris (Dog), this protein is Solute carrier family 46 member 2.